The following is a 505-amino-acid chain: Maturase K (505 aa).

The protein belongs to the intron maturase 2 family. MatK subfamily.

It localises to the plastid. Its subcellular location is the chloroplast. In terms of biological role, usually encoded in the trnK tRNA gene intron. Probably assists in splicing its own and other chloroplast group II introns. This chain is Maturase K, found in Chiococca alba (West Indian milkberry).